The primary structure comprises 174 residues: Histone deacetylase complex subunit SAP30 homolog (174 aa).

The segment at 22–70 adopts an Atypical zinc-finger fold; it reads CCLLDDGERCRKQAGNASYSKRIQKTVTQRRLKLSIDSHARHIYICDFH.

The protein belongs to the SAP30 family. Component of the class 1 Sin3-histone deacetylase complex (HDAC).

The protein localises to the nucleus. Required for the function of the class 1 Sin3-histone deacetylase complex (HDAC). This Anopheles gambiae (African malaria mosquito) protein is Histone deacetylase complex subunit SAP30 homolog.